Consider the following 331-residue polypeptide: Probable allantoicase (331 aa).

This sequence belongs to the allantoicase family.

The catalysed reaction is allantoate + H2O = (S)-ureidoglycolate + urea. Its pathway is nitrogen metabolism; (S)-allantoin degradation; (S)-ureidoglycolate from allantoate (aminidohydrolase route): step 1/1. This is Probable allantoicase from Pseudomonas fluorescens (strain SBW25).